A 323-amino-acid polypeptide reads, in one-letter code: tRNA dimethylallyltransferase (323 aa).

16–23 (GPTASGKT) provides a ligand contact to ATP. 18-23 (TASGKT) contributes to the substrate binding site. Interaction with substrate tRNA regions lie at residues 41-44 (DSAL), 165-169 (QRIQR), 253-258 (RCVGYR), and 286-293 (KRQITWLR).

Belongs to the IPP transferase family. Monomer. Requires Mg(2+) as cofactor.

The enzyme catalyses adenosine(37) in tRNA + dimethylallyl diphosphate = N(6)-dimethylallyladenosine(37) in tRNA + diphosphate. In terms of biological role, catalyzes the transfer of a dimethylallyl group onto the adenine at position 37 in tRNAs that read codons beginning with uridine, leading to the formation of N6-(dimethylallyl)adenosine (i(6)A). The protein is tRNA dimethylallyltransferase of Ralstonia nicotianae (strain ATCC BAA-1114 / GMI1000) (Ralstonia solanacearum).